A 375-amino-acid chain; its full sequence is MSVTELKERHMAATQTVSDLREKLKQKRLQLLDTDVSGYARSQGKTPVTFGPTDLVCCRILQGHTGKVYSLDWTPEKNRIVSASQDGRLIVWNALTSQKTHAIKLPCAWVMTCAFSPSGQSVACGGLDSVCSIYNLNSPIDKDGNHPVSRMLSGHKGYVSSCQYVPDEDTHLITSSGDQTCVLWDITTGLRTSVFGGEFQSGHTADVQSVSISSSNPRLFVSGSCDTTARLWDNRVASRAQRTFYGHEGDVNTVKFFPDGNRFGTGSEDGTCRLFDIRTGHQLQVYYQPHGDGDIPHVTSMAFSISGRLLFVGYSNGDCYVWDTLLAKVVLNLGGVQNSHEGRISCLGLSADGSALCTGSWDTNLKIWAFGGTEV.

7 WD repeats span residues glycine 63–asparagine 93, leucine 105–asparagine 135, glycine 154–aspartate 185, glycine 202–aspartate 233, glycine 246–aspartate 276, glycine 293–aspartate 323, and serine 339–alanine 369.

This sequence belongs to the WD repeat G protein beta family. G proteins are composed of 3 units, alpha, beta and gamma.

In terms of biological role, guanine nucleotide-binding proteins (G proteins) are involved as a modulator or transducer in various transmembrane signaling systems. The beta and gamma chains are required for the GTPase activity, for replacement of GDP by GTP, and for G protein-effector interaction. This Nicotiana tabacum (Common tobacco) protein is Guanine nucleotide-binding protein subunit beta.